The sequence spans 174 residues: MTRILGIDPGSQRTGIGIIDIDEDGRSRHVHHAPLMLLGEGDFSQRLKRLLQGLGELIETYRPDEVAIERVFMGKSAASALKLGHARGAAICAVVMRDLPVHEYAATEVKLALVGKGGADKVQVQHMVGIMLNLKGKLQPDAADALAVAITHAHVRATAQRLGVNTQQAWSRKK.

Catalysis depends on residues aspartate 8, glutamate 69, and aspartate 141. Aspartate 8, glutamate 69, and aspartate 141 together coordinate Mg(2+).

Belongs to the RuvC family. In terms of assembly, homodimer which binds Holliday junction (HJ) DNA. The HJ becomes 2-fold symmetrical on binding to RuvC with unstacked arms; it has a different conformation from HJ DNA in complex with RuvA. In the full resolvosome a probable DNA-RuvA(4)-RuvB(12)-RuvC(2) complex forms which resolves the HJ. Mg(2+) is required as a cofactor.

Its subcellular location is the cytoplasm. The catalysed reaction is Endonucleolytic cleavage at a junction such as a reciprocal single-stranded crossover between two homologous DNA duplexes (Holliday junction).. The RuvA-RuvB-RuvC complex processes Holliday junction (HJ) DNA during genetic recombination and DNA repair. Endonuclease that resolves HJ intermediates. Cleaves cruciform DNA by making single-stranded nicks across the HJ at symmetrical positions within the homologous arms, yielding a 5'-phosphate and a 3'-hydroxyl group; requires a central core of homology in the junction. The consensus cleavage sequence is 5'-(A/T)TT(C/G)-3'. Cleavage occurs on the 3'-side of the TT dinucleotide at the point of strand exchange. HJ branch migration catalyzed by RuvA-RuvB allows RuvC to scan DNA until it finds its consensus sequence, where it cleaves and resolves the cruciform DNA. The protein is Crossover junction endodeoxyribonuclease RuvC of Xanthomonas euvesicatoria pv. vesicatoria (strain 85-10) (Xanthomonas campestris pv. vesicatoria).